A 519-amino-acid polypeptide reads, in one-letter code: Cell adhesion molecule CEACAM1 (519 aa).

Positions 1–34 (MELASARLLRGQIPWRGLLLTASLLTYWSPLTTA) are cleaved as a signal peptide. Pyrrolidone carboxylic acid is present on Q35. At 35-425 (QVTVDAVPPN…QGNSGLSEGA (391 aa)) the chain is on the extracellular side. The segment at 39–142 (DAVPPNVVEE…QTSVQFRVYP (104 aa)) is required for homophilic binding. Positions 42–140 (PPNVVEEKSV…PIQTSVQFRV (99 aa)) constitute an Ig-like V-type domain. N-linked (GlcNAc...) asparagine glycans are attached at residues N87, N104, N113, N148, N152, N173, N197, N224, N256, N288, N292, N302, N315, and N331. Ig-like C2-type domains lie at 147–232 (PNVT…FNLD), 237–317 (PDAP…KNIT), and 325–403 (PSIQ…FRIS). Cysteines 167 and 215 form a disulfide. C259 and C299 form a disulfide bridge. An intrachain disulfide couples C344 to C392. N374 is a glycosylation site (N-linked (GlcNAc...) asparagine; atypical). Residues 426–446 (IAGIVIGSVAGVALIAALAYF) traverse the membrane as a helical segment. The interval 445-457 (YFLYSRKTGGGSD) is interaction with calmodulin. Over 447–519 (LYSRKTGGGS…ETVYSVVKKK (73 aa)) the chain is Cytoplasmic. The interaction with FLNA stretch occupies residues 447 to 519 (LYSRKTGGGS…ETVYSVVKKK (73 aa)). Residues 455-519 (GSDHRDLTEH…ETVYSVVKKK (65 aa)) form a disordered region. Residues 456-466 (SDHRDLTEHKP) are compositionally biased toward basic and acidic residues. The tract at residues 484 to 519 (DDVSYSVLNFNAQQSKRPTSASSSPTETVYSVVKKK) is required for interaction with PTPN11 and PTPN6 and for control of phosphorylation level. Y488 bears the Phosphotyrosine; by SRC, LCK, INSR and EGFR mark. A compositionally biased stretch (polar residues) spans 489–512 (SVLNFNAQQSKRPTSASSSPTETV). A Phosphoserine modification is found at S503. A Phosphotyrosine; by INSR, SRC and LCK modification is found at Y513. The interval 513–516 (YSVV) is essential for interaction with PTPN11 and PTPN6.

It belongs to the immunoglobulin superfamily. CEA family. Monomer. Oligomer. Heterodimer. Homodimer. Cis-dimer/oligomer (via Ig-like C2-type and/or via cytoplasmic domains); induced by trans-homophilic cell adhesion through an allosteric mechanism transmitted by the Ig-like V-type domain, and is regulated by intracellular calcium and calmodulin. Interacts (via cytoplasmic domain) with calmodulin in a calcium dependent manner; reduces homophilic cell adhesion through dissociation of dimer. Isoform 1 interacts (via cytoplasmic domain) with PTPN11 (preferentially) and PTPN6; cis-homodimer form is preferred; this interaction is decreased by formation of isoform 1 / isoform 2 cis-heterodimers and is dependent on the monomer/dimer equilibrium; this interaction is phosphorylation-dependent. Isoform 1 interacts with LYN. Isoform 1 interacts (via cytoplasmic domain) with SRC (via SH2 domain); this interaction is regulated by trans-homophilic cell adhesion. Isoform 1 interacts (via cytoplasmic domain) with LCK; mediates phosphorylation at Tyr-488 and Tyr-513 resulting in PTPN6 association. Isoform 1 interacts with PTPN6; this interaction is phosphorylation-dependent and causes a profound decrease in TCR stimulation-induced CD247 and ZAP70 phosphorylation. Isoform 1 interacts with TCR/CD3 complex through TCR beta chain and CD3E; colocalizes at the cell surface and upon stimulation of the TCR/CD3 complex recruits PTPN6 in the TCR/CD3 complex, resulting in dephosphorylation of CD247 and ZAP70. Isoform 1 interacts (via cytoplasmic domain) with SHC1 (via SH2 domain); SHC1 mediates interaction with INSR or EGFR in a Ser-503 phosphorylation-dependent manner. Isoform 1 interacts with EGFR; the interaction is indirect. Isoform 1 interacts with CSF3R; down-regulates the CSF3R-STAT3 pathway through recruitment of PTPN6 that dephosphorylates CSF3R. Isoform 1 (phosphorylated form) interacts with TLR4 and SYK; recruits PTPN6 that dephosphorylates SYK, reducing the production of reactive oxygen species (ROS) and lysosome disruption, leading to a reduction of the inflammasome activity. Isoform 1 interacts with FLNA; inhibits cell migration and cell scattering by interfering with the interaction of FLNA with RALA. Isoform 1 interacts (via cytoplasmic domain) with PXN; the interaction is phosphotyrosyl-dependent. Isoform 1 interacts with KLRK1; recruits PTPN6 that dephosphorylates VAV1. Isoform 1 interacts with CEACAM8. Isoform 1 interacts with FASN; this interaction is insulin and phosphorylation-dependent; reduces fatty-acid synthase activity. Interacts (via Ig-like V-type) with HAVCR2 (via Ig-like V-type); facilitates the maturation and cell surface expression of HAVCR2 thereby regulating T-cell tolerance induction. Isoform 2 interacts (via the cytoplasmic domain) with ANXA2; this interaction is regulated by phosphorylation and appears in the AIIt complex. Interacts (via Lewis X moieties) with CD209 (via C-type lectin domain); this interaction is regulated by the glycosylation pattern of CEACAM1 on cell types and regulates contact between dendritic cells and neutrophils. Phosphorylated on serine and tyrosine. Isoform 1 is phosphorylated on tyrosine by Src family kinases like SRC and LCK and by receptor like CSF3R, EGFR and INSR upon stimulation. Phosphorylated at Ser-503; mediates activity. Phosphorylated at Tyr-488; regulates activity. Phosphorylated at Tyr-488 by EGFR and INSR upon stimulation; this phosphorylation is Ser-503-phosphorylation-dependent; mediates cellular internalization; increases interaction with FASN. Phosphorylated at Tyr-488 and Tyr-513 by LCK; mediates PTPN6 association and is regulated by homophilic ligation of CEACAM1 in the absence of T-cell activation. Phosphorylated at Tyr-513; mediates interaction with PTPN11. Post-translationally, phosphorylated on serine and threonine. In terms of tissue distribution, expressed in epithelia, vessel endothelia, leukocytes and platelets. Isoform 1 and isoform 2 are highly expressed in liver and intestine, moderately in lung, and weakly in muscle, kidney, and spleen. Expressed in granulocytes, lymphocytes, granulocytes, B cells, and T-cells.

It localises to the cell membrane. Its subcellular location is the lateral cell membrane. The protein localises to the apical cell membrane. The protein resides in the basal cell membrane. It is found in the cell junction. It localises to the adherens junction. Its subcellular location is the cytoplasmic vesicle. The protein localises to the secretory vesicle. The protein resides in the cell projection. It is found in the microvillus membrane. Cell adhesion protein that mediates homophilic cell adhesion in a calcium-independent manner. Plays a role as coinhibitory receptor in immune response, insulin action and also functions as an activator during angiogenesis. Its coinhibitory receptor function is phosphorylation- and PTPN6 -dependent, which in turn, suppress signal transduction of associated receptors by dephosphorylation of their downstream effectors. Plays a role in immune response, of T-cells, natural killer (NK) and neutrophils. Upon TCR/CD3 complex stimulation, inhibits TCR-mediated cytotoxicity by blocking granule exocytosis by mediating homophilic binding to adjacent cells, allowing interaction with and phosphorylation by LCK and interaction with the TCR/CD3 complex which recruits PTPN6 resulting in dephosphorylation of CD247 and ZAP70. Also inhibits T-cell proliferation and cytokine production through inhibition of JNK cascade and plays a crucial role in regulating autoimmunity and anti-tumor immunity by inhibiting T-cell through its interaction with HAVCR2. Upon natural killer (NK) cells activation, inhibit KLRK1-mediated cytolysis of CEACAM1-bearing tumor cells by trans-homophilic interactions with CEACAM1 on the target cell and lead to cis-interaction between CEACAM1 and KLRK1, allowing PTPN6 recruitment and then VAV1 dephosphorylation. Upon neutrophils activation negatively regulates IL1B production by recruiting PTPN6 to a SYK-TLR4-CEACAM1 complex, that dephosphorylates SYK, reducing the production of reactive oxygen species (ROS) and lysosome disruption, which in turn, reduces the activity of the inflammasome. Down-regulates neutrophil production by acting as a coinhibitory receptor for CSF3R by downregulating the CSF3R-STAT3 pathway through recruitment of PTPN6 that dephosphorylates CSF3R. Also regulates insulin action by promoting INS clearance and regulating lipogenesis in liver through regulating insulin signaling. Upon INS stimulation, undergoes phosphorylation by INSR leading to INS clearance by increasing receptor-mediated insulin endocytosis. This inernalization promotes interaction with FASN leading to receptor-mediated insulin degradation and to reduction of FASN activity leading to negative regulation of fatty acid synthesis. INSR-mediated phosphorylation also provokes a down-regulation of cell proliferation through SHC1 interaction resulting in decrease coupling of SHC1 to the MAPK3/ERK1-MAPK1/ERK2 and phosphatidylinositol 3-kinase pathways. Functions as activator in angiogenesis by promoting blood vessel remodeling through endothelial cell differentiation and migration and in arteriogenesis by increasing the number of collateral arteries and collateral vessel calibers after ischemia. Also regulates vascular permeability through the VEGFR2 signaling pathway resulting in control of nitric oxide production. Down-regulates cell growth in response to EGF through its interaction with SHC1 that mediates interaction with EGFR resulting in decrease coupling of SHC1 to the MAPK3/ERK1-MAPK1/ERK2 pathway. Negatively regulates platelet aggregation by decreasing platelet adhesion on type I collagen through the GPVI-FcRgamma complex. Inhibits cell migration and cell scattering through interaction with FLNA; interferes with the interaction of FLNA with RALA. Mediates bile acid transport activity in a phosphorylation dependent manner. Negatively regulates osteoclastogenesis. Functionally, cell adhesion proteins that mediates homophilic cell adhesion in a calcium-independent manner. Promotes populations of T-cells regulating IgA production and secretion associated with control of the commensal microbiota and resistance to enteropathogens. This chain is Cell adhesion molecule CEACAM1, found in Rattus norvegicus (Rat).